Consider the following 143-residue polypeptide: AP-2 complex subunit sigma (143 aa).

This sequence belongs to the adaptor complexes small subunit family. As to quaternary structure, adaptor protein complex 2 (AP-2) is a heterotetramer composed of two large adaptins (alpha-type subunit apl3 and beta-type subunit apl1), a medium chain (mu-type subunit apm4) and a small adaptin (sigma-type subunit aps2).

Its subcellular location is the cell membrane. The protein resides in the membrane. The protein localises to the coated pit. Its function is as follows. Component of the adaptor complexes which link clathrin to receptors in coated vesicles. Clathrin-associated protein complexes are believed to interact with the cytoplasmic tails of membrane proteins, leading to their selection and concentration. This Schizosaccharomyces pombe (strain 972 / ATCC 24843) (Fission yeast) protein is AP-2 complex subunit sigma (aps2).